A 455-amino-acid polypeptide reads, in one-letter code: Ribulose bisphosphate carboxylase large chain (455 aa).

Position 5 is an N6,N6,N6-trimethyllysine (K5). Substrate is bound by residues N114 and T164. K166 serves as the catalytic Proton acceptor. K168 lines the substrate pocket. Mg(2+) contacts are provided by K192, D194, and E195. K192 bears the N6-carboxylysine mark. Catalysis depends on H285, which acts as the Proton acceptor. The substrate site is built by R286, H318, and S370.

It belongs to the RuBisCO large chain family. Type I subfamily. In terms of assembly, heterohexadecamer of 8 large chains and 8 small chains; disulfide-linked. The disulfide link is formed within the large subunit homodimers. Mg(2+) serves as cofactor. Post-translationally, the disulfide bond which can form in the large chain dimeric partners within the hexadecamer appears to be associated with oxidative stress and protein turnover.

Its subcellular location is the plastid. It localises to the chloroplast. It catalyses the reaction 2 (2R)-3-phosphoglycerate + 2 H(+) = D-ribulose 1,5-bisphosphate + CO2 + H2O. The enzyme catalyses D-ribulose 1,5-bisphosphate + O2 = 2-phosphoglycolate + (2R)-3-phosphoglycerate + 2 H(+). Functionally, ruBisCO catalyzes two reactions: the carboxylation of D-ribulose 1,5-bisphosphate, the primary event in carbon dioxide fixation, as well as the oxidative fragmentation of the pentose substrate in the photorespiration process. Both reactions occur simultaneously and in competition at the same active site. The polypeptide is Ribulose bisphosphate carboxylase large chain (Lupinus albus (White lupine)).